Here is a 607-residue protein sequence, read N- to C-terminus: Elongation factor 4 (607 aa).

Residues 11–193 (GKIRNFSIIA…QIVEKVPAPT (183 aa)) enclose the tr-type G domain. GTP is bound by residues 23 to 28 (DHGKST) and 140 to 143 (NKID).

It belongs to the TRAFAC class translation factor GTPase superfamily. Classic translation factor GTPase family. LepA subfamily.

It localises to the cell membrane. It catalyses the reaction GTP + H2O = GDP + phosphate + H(+). Its function is as follows. Required for accurate and efficient protein synthesis under certain stress conditions. May act as a fidelity factor of the translation reaction, by catalyzing a one-codon backward translocation of tRNAs on improperly translocated ribosomes. Back-translocation proceeds from a post-translocation (POST) complex to a pre-translocation (PRE) complex, thus giving elongation factor G a second chance to translocate the tRNAs correctly. Binds to ribosomes in a GTP-dependent manner. The polypeptide is Elongation factor 4 (Streptococcus pneumoniae (strain Taiwan19F-14)).